The chain runs to 251 residues: Transcriptional cofactor Bfc (251 aa).

As to quaternary structure, interacts with srp (via GATA-type Zn-finger domain); this interaction enhances srp binding to the promoter of crq/croquemort.

Its subcellular location is the nucleus. In terms of biological role, transcriptional cofactor involved in efferocytosis. Together with srp mediates expression of the phagocytic receptor crq/croquemort in response to apoptotic cells, and is up-regulated by crq/croquemort in a positive feedback mechanism. Involved in macrophage engulfment and clearance of apoptotic cells during embryogenesis. This chain is Transcriptional cofactor Bfc, found in Drosophila melanogaster (Fruit fly).